The sequence spans 215 residues: 3-demethoxyubiquinol 3-hydroxylase (215 aa).

Fe cation contacts are provided by glutamate 64, glutamate 94, histidine 97, glutamate 146, glutamate 178, and histidine 181.

This sequence belongs to the COQ7 family. Fe cation serves as cofactor.

The protein resides in the cell membrane. The enzyme catalyses a 5-methoxy-2-methyl-3-(all-trans-polyprenyl)benzene-1,4-diol + AH2 + O2 = a 3-demethylubiquinol + A + H2O. The protein operates within cofactor biosynthesis; ubiquinone biosynthesis. Catalyzes the hydroxylation of 2-nonaprenyl-3-methyl-6-methoxy-1,4-benzoquinol during ubiquinone biosynthesis. In Pseudomonas savastanoi pv. phaseolicola (strain 1448A / Race 6) (Pseudomonas syringae pv. phaseolicola (strain 1448A / Race 6)), this protein is 3-demethoxyubiquinol 3-hydroxylase.